The following is a 491-amino-acid chain: Probable malate:quinone oxidoreductase (491 aa).

The protein belongs to the MQO family. Requires FAD as cofactor.

The enzyme catalyses (S)-malate + a quinone = a quinol + oxaloacetate. It functions in the pathway carbohydrate metabolism; tricarboxylic acid cycle; oxaloacetate from (S)-malate (quinone route): step 1/1. The polypeptide is Probable malate:quinone oxidoreductase (Actinobacillus pleuropneumoniae serotype 7 (strain AP76)).